The chain runs to 109 residues: uncharacterized protein (109 aa).

It localises to the mitochondrion. This is an uncharacterized protein from Arabidopsis thaliana (Mouse-ear cress).